Reading from the N-terminus, the 556-residue chain is Cholesterol oxidase (556 aa).

Residues G18, E37, G88, A93, and V235 each contribute to the FAD site. The active-site Proton acceptor is the H471. Residue G504 coordinates FAD.

It belongs to the GMC oxidoreductase family. Requires FAD as cofactor.

The enzyme catalyses cholesterol + O2 = cholest-5-en-3-one + H2O2. It catalyses the reaction cholest-5-en-3-one = cholest-4-en-3-one. It functions in the pathway steroid metabolism; cholesterol degradation. Bifunctional enzyme that catalyzes the oxidation and isomerization of cholesterol to cholestenone (cholest-4-en-3-one), an initial step in the cholesterol degradation process. In Acinetobacter baumannii, this protein is Cholesterol oxidase.